A 511-amino-acid chain; its full sequence is DEP domain-containing protein 7 (511 aa).

The DEP domain occupies 46–136 (LQTQVEVKKR…SSCSLYRFTT (91 aa)).

Belongs to the DEPDC7 family. In terms of tissue distribution, expressed in liver.

The protein is DEP domain-containing protein 7 (DEPDC7) of Homo sapiens (Human).